Consider the following 392-residue polypeptide: Selenide, water dikinase 1 (392 aa).

Residue cysteine 31 is part of the active site. ATP is bound by residues lysine 32, glycine 67–aspartate 69, aspartate 87, aspartate 110, and glycine 161–threonine 164. Aspartate 69 is a binding site for Mg(2+). Aspartate 110 contributes to the Mg(2+) binding site. Aspartate 265 contributes to the Mg(2+) binding site. Residue threonine 387 is modified to Phosphothreonine.

The protein belongs to the selenophosphate synthase 1 family. Class II subfamily. As to quaternary structure, homodimer. The cofactor is Mg(2+).

It localises to the cell membrane. The protein resides in the nucleus membrane. It catalyses the reaction hydrogenselenide + ATP + H2O = selenophosphate + AMP + phosphate + 2 H(+). Its function is as follows. Synthesizes selenophosphate from selenide and ATP. The chain is Selenide, water dikinase 1 (sephs1) from Danio rerio (Zebrafish).